The following is a 592-amino-acid chain: Ferric-chelate reductase 1 (592 aa).

A helical transmembrane segment spans residues 2–22 (AVSGFTLGTCILLLHISYVAN). Positions 13–179 (LLLHISYVAN…FTTPKATVVP (167 aa)) constitute a Reelin domain. N-linked (GlcNAc...) asparagine glycosylation is found at N138, N308, and N321. In terms of domain architecture, DOMON spans 216–331 (EASCVFLSFT…TSYYIFLADG (116 aa)). The region spanning 335 to 534 (DGRIYKHSQQ…VGTEVVLEVH (200 aa)) is the Cytochrome b561 domain. A helical membrane pass occupies residues 372 to 392 (VHGALMFVAWMTTVSIGVLVA). The heme b site is built by H373 and H414. Helical transmembrane passes span 415–435 (RMLM…PFIY) and 446–466 (HPYL…LAVF). Residues H446 and H482 each coordinate heme b. Helical transmembrane passes span 491–511 (IIAV…LPDS), 515–535 (YAMT…EVHA), and 569–589 (AVLA…LSAI).

The protein belongs to the FRRS1 family. Heme b serves as cofactor.

It localises to the membrane. Ferric-chelate reductases reduce Fe(3+) to Fe(2+) before its transport from the endosome to the cytoplasm. This is Ferric-chelate reductase 1 (FRRS1) from Homo sapiens (Human).